Consider the following 71-residue polypeptide: UPF0434 protein Meso_3270 (71 aa).

This sequence belongs to the UPF0434 family.

In Chelativorans sp. (strain BNC1), this protein is UPF0434 protein Meso_3270.